Reading from the N-terminus, the 430-residue chain is Enolase (430 aa).

Position 163 (Gln-163) interacts with (2R)-2-phosphoglycerate. Catalysis depends on Glu-205, which acts as the Proton donor. The Mg(2+) site is built by Asp-242, Glu-287, and Asp-314. (2R)-2-phosphoglycerate-binding residues include Lys-339, Arg-368, Ser-369, and Lys-390. The active-site Proton acceptor is Lys-339.

The protein belongs to the enolase family. It depends on Mg(2+) as a cofactor.

It is found in the cytoplasm. The protein localises to the secreted. Its subcellular location is the cell surface. The catalysed reaction is (2R)-2-phosphoglycerate = phosphoenolpyruvate + H2O. It functions in the pathway carbohydrate degradation; glycolysis; pyruvate from D-glyceraldehyde 3-phosphate: step 4/5. Catalyzes the reversible conversion of 2-phosphoglycerate (2-PG) into phosphoenolpyruvate (PEP). It is essential for the degradation of carbohydrates via glycolysis. The protein is Enolase of Bacillus velezensis (strain DSM 23117 / BGSC 10A6 / LMG 26770 / FZB42) (Bacillus amyloliquefaciens subsp. plantarum).